A 313-amino-acid polypeptide reads, in one-letter code: MEKRKIILDCDPGHDDAIAMMMAAKHPAIDLLGITIVAGNQTLDKTLINGLNVCQKLEINVPVYAGMPQPIMRQQIVADNIHGETGLDGPVFEPLTRQAESTHAVKYIIDTLMASDGDITLVPVGPLSNIAVAMRMQPAILPKIREIVLMGGAYGTGNFTPSAEFNIFADPEAARVVFTSGVPLVMMGLDLTNQTVCTPDVIARMERAGGPAGELFSDIMNFTLKTQFENYGLAGGPVHDATCIGYLINPDGIKTQEMYVEVDVNSGPCYGRTVCDELGVLGKPANTKVGITIDTDWFWGLVEECVRGYIKTH.

The Proton acceptor role is filled by Asp-11. Asp-11, Asp-16, and Val-124 together coordinate Ca(2+). Gln-227 and His-239 together coordinate substrate. Position 240 (Asp-240) interacts with Ca(2+).

This sequence belongs to the IUNH family. RihB subfamily. In terms of assembly, homotetramer. It depends on Ca(2+) as a cofactor.

The catalysed reaction is a pyrimidine ribonucleoside + H2O = a pyrimidine nucleobase + D-ribose. In terms of biological role, hydrolyzes cytidine or uridine to ribose and cytosine or uracil, respectively. Has a clear preference for cytidine over uridine. Strictly specific for ribonucleosides. The polypeptide is Pyrimidine-specific ribonucleoside hydrolase RihB (Escherichia coli (strain SMS-3-5 / SECEC)).